The sequence spans 615 residues: Vitamin B12 transporter BtuB (615 aa).

The signal sequence occupies residues 1-20 (MIKKVSLMTALSVTAFSGWA). The TonB box signature appears at 25 to 32 (DSLVVTAN). The region spanning 37–151 (PANTVLAPTS…IGGVVNIITT (115 aa)) is the TBDR plug domain. Residues Ser84, Asn91, and 109-110 (VT) contribute to the cyanocob(III)alamin site. Residues 154–615 (KDGTTLNAGV…EYTLSGSYTF (462 aa)) form the TBDR beta-barrel domain. Beta stranded transmembrane passes span 157–164 (TTLNAGVG), 168–177 (YQNYGGSTQQ), and 183–194 (TRVTLAGDYTYT). Residues Asp198, Gln210, Asp212, and Asp214 each coordinate Ca(2+). Beta stranded transmembrane passes span 216-226 (YMNKTIYGALE) and 231-247 (DQWS…NRTA). Ca(2+) contacts are provided by Tyr248 and Asp249. Position 250 (Ala250) interacts with cyanocob(III)alamin. Ca(2+) is bound at residue Asp262. 17 beta stranded membrane-spanning segments follow: residues 264-278 (RQLY…LRFN), 280-297 (GIFH…KDYN), 310-326 (TLDE…NSVD), 329-338 (HGNVGAGVDW), 354-370 (TNLR…QKFG), 372-382 (FTLEGAARSDD), 386-401 (FGRH…WEFI), 404-418 (YRFI…KAPN), 435-444 (ESKQWEGAFE), 450-459 (VSWRVSAYRN), 474-491 (YYNV…TASF), 495-510 (PLTH…ARNA), 518-530 (RRAK…QLDT), 536-551 (DWSL…YDTD), 559-573 (KVKM…LAVS), 586-597 (IANLFDKDYETV), and 603-615 (AGRE…SYTF). Thr310 is a cyanocob(III)alamin binding site. Arg518 is a cyanocob(III)alamin binding site. The short motif at 598-615 (YGYETAGREYTLSGSYTF) is the TonB C-terminal box element.

Belongs to the TonB-dependent receptor family. BtuB (TC 1.B.14.3.1) subfamily.

The protein localises to the cell outer membrane. Involved in the active translocation of vitamin B12 (cyanocobalamin) across the outer membrane to the periplasmic space. It derives its energy for transport by interacting with the trans-periplasmic membrane protein TonB. This is Vitamin B12 transporter BtuB from Enterobacter sp. (strain 638).